Reading from the N-terminus, the 601-residue chain is Glutathione-regulated potassium-efflux system protein KefB (601 aa).

13 helical membrane-spanning segments follow: residues Ser-4 to Ala-24, Ile-29 to Phe-49, Glu-55 to Leu-75, Ile-87 to Met-107, Ala-115 to Met-135, Val-152 to Gly-172, His-177 to Gly-197, Phe-207 to Gly-227, Leu-230 to Leu-250, Gly-268 to Tyr-288, Leu-291 to Leu-311, Met-324 to Ala-344, and Ala-356 to Val-376. An RCK N-terminal domain is found at Lys-400–Thr-519.

The protein belongs to the monovalent cation:proton antiporter 2 (CPA2) transporter (TC 2.A.37) family. KefB subfamily. In terms of assembly, interacts with the regulatory subunit KefG.

It localises to the cell inner membrane. Pore-forming subunit of a potassium efflux system that confers protection against electrophiles. Catalyzes K(+)/H(+) antiport. The protein is Glutathione-regulated potassium-efflux system protein KefB of Escherichia coli (strain SMS-3-5 / SECEC).